A 325-amino-acid chain; its full sequence is Beta-1,3-galactosyltransferase 6 (325 aa).

Residues 1 to 11 (MKVFRRAWRHR) lie on the Cytoplasmic side of the membrane. Residues 12 to 30 (VALGLGGLAFCGTTLLYLA) traverse the membrane as a helical; Signal-anchor for type II membrane protein segment. Topologically, residues 31-325 (RCASEGETPS…QCCQRKEGVP (295 aa)) are lumenal. The N-linked (GlcNAc...) asparagine glycan is linked to Asn-127.

It belongs to the glycosyltransferase 31 family. Mn(2+) is required as a cofactor.

It is found in the golgi apparatus. The protein resides in the golgi stack membrane. It catalyses the reaction 3-O-(beta-D-galactosyl-(1-&gt;4)-beta-D-xylosyl)-L-seryl-[protein] + UDP-alpha-D-galactose = 3-O-(beta-D-galactosyl-(1-&gt;3)-beta-D-galactosyl-(1-&gt;4)-beta-D-xylosyl)-L-seryl-[protein] + UDP + H(+). It participates in glycan metabolism; chondroitin sulfate biosynthesis. The protein operates within glycan metabolism; heparan sulfate biosynthesis. Beta-1,3-galactosyltransferase that transfers galactose from UDP-galactose to substrates with a terminal beta-linked galactose residue. Has a preference for galactose-beta-1,4-xylose that is found in the linker region of glycosaminoglycans, such as heparan sulfate and chondroitin sulfate. Has no activity towards substrates with terminal glucosamine or galactosamine residues. The protein is Beta-1,3-galactosyltransferase 6 (B3galt6) of Mus musculus (Mouse).